The chain runs to 240 residues: Phosducin-like protein 3 (240 aa).

Position 1 is an N-acetylmethionine (M1). Residues 27 to 181 (KELEEEEAEK…EGDIKAQFIG (155 aa)) form the Phosducin domain. A phosphoserine mark is found at S44, S65, S235, and S237. Residues 92-240 (FGEVLEISGK…MRRDSDSEDD (149 aa)) are thioredoxin fold.

Belongs to the phosducin family. As to quaternary structure, interacts (via thioredoxin fold region) with KDR/VEGFR2 (via juxtamembrane domain). Forms ternary complexes with the chaperonin CCT complex and actin substrate, leading to inhibition of actin folding. Interacts with XIAP (via BIR 3 and RING domain). Interacts with HSP90AA1 and HSP90AB1. In terms of processing, N-terminal methionine acetylation destabilizes the protein. In terms of tissue distribution, expressed in blood vessels (at protein level).

Its subcellular location is the cytoplasm. The protein resides in the perinuclear region. It is found in the endoplasmic reticulum. In terms of biological role, acts as a chaperone for the angiogenic VEGF receptor KDR/VEGFR2, increasing its abundance by inhibiting its ubiquitination and degradation. Inhibits the folding activity of the chaperonin-containing T-complex (CCT) which leads to inhibition of cytoskeletal actin folding. Acts as a chaperone during heat shock alongside HSP90 and HSP40/70 chaperone complexes. Modulates the activation of caspases during apoptosis. In Mus musculus (Mouse), this protein is Phosducin-like protein 3 (Pdcl3).